A 419-amino-acid polypeptide reads, in one-letter code: MDIQETINQMGKKAAAAARAMRAASPSAKTSALLSLAQLIRQENKAITEANARDLAAAADRGLDAPRMDRLRLTDAVIEEMARACEFVAGLPDPIGATEKQWQRPNGLLVGKMRIPLGVISMIYESRPNVTVDSGILCLKAGNAVILRGGSEAFHSNMMLASLIHRALILAGLPQDAVQVVPSTDRGAIKALCELEEYIDVIIPRGGETLIRTVVADARMPVLKHYKGVCHAYVDEGADLEQACEIIFNAKVQRPGVCNALEGLLVHRSEAHTLLPAVAQKLGDAGVSFRACPRALPLLAPHGVPMAETDPGTEFHDLVMVVKVVDSQDEAQDYIAQHGSNHTEIICTRNHQNAMRFVREVDASMVAVNASSRFNDGGQLGLGAEIGISTSKLHSYGPMGVEELTTTKFVVLGNGQIRQ.

The protein belongs to the gamma-glutamyl phosphate reductase family.

The protein resides in the cytoplasm. It catalyses the reaction L-glutamate 5-semialdehyde + phosphate + NADP(+) = L-glutamyl 5-phosphate + NADPH + H(+). The protein operates within amino-acid biosynthesis; L-proline biosynthesis; L-glutamate 5-semialdehyde from L-glutamate: step 2/2. Catalyzes the NADPH-dependent reduction of L-glutamate 5-phosphate into L-glutamate 5-semialdehyde and phosphate. The product spontaneously undergoes cyclization to form 1-pyrroline-5-carboxylate. The polypeptide is Gamma-glutamyl phosphate reductase (Oleidesulfovibrio alaskensis (strain ATCC BAA-1058 / DSM 17464 / G20) (Desulfovibrio alaskensis)).